Consider the following 77-residue polypeptide: Large ribosomal subunit protein bL31 (77 aa).

The protein belongs to the bacterial ribosomal protein bL31 family. Type A subfamily. In terms of assembly, part of the 50S ribosomal subunit.

Functionally, binds the 23S rRNA. In Paramagnetospirillum magneticum (strain ATCC 700264 / AMB-1) (Magnetospirillum magneticum), this protein is Large ribosomal subunit protein bL31.